The primary structure comprises 479 residues: Chromosomal replication initiator protein DnaA (479 aa).

The segment at 1 to 74 (MFSGVVMAWQ…RSLTGVDSSI (74 aa)) is domain I, interacts with DnaA modulators. Positions 74–142 (ITDVRFLEKK…SVPKNNASIR (69 aa)) are domain II. The interval 143–360 (ALHPRYTFDE…SAITAIGARA (218 aa)) is domain III, AAA+ region. ATP is bound by residues Gly-187, Gly-189, Lys-190, and Ser-191. A domain IV, binds dsDNA region spans residues 361–479 (RLMGGYIDMN…NLLSDKVKQI (119 aa)).

Belongs to the DnaA family. As to quaternary structure, oligomerizes as a right-handed, spiral filament on DNA at oriC.

Its subcellular location is the cytoplasm. Functionally, plays an essential role in the initiation and regulation of chromosomal replication. ATP-DnaA binds to the origin of replication (oriC) to initiate formation of the DNA replication initiation complex once per cell cycle. Binds the DnaA box (a 9 base pair repeat at the origin) and separates the double-stranded (ds)DNA. Forms a right-handed helical filament on oriC DNA; dsDNA binds to the exterior of the filament while single-stranded (ss)DNA is stabiized in the filament's interior. The ATP-DnaA-oriC complex binds and stabilizes one strand of the AT-rich DNA unwinding element (DUE), permitting loading of DNA polymerase. After initiation quickly degrades to an ADP-DnaA complex that is not apt for DNA replication. Binds acidic phospholipids. The polypeptide is Chromosomal replication initiator protein DnaA (Desulfotalea psychrophila (strain LSv54 / DSM 12343)).